The primary structure comprises 1385 residues: DNA-directed RNA polymerase subunit beta' (1385 aa).

4 residues coordinate Zn(2+): C75, C77, C90, and C93. Residues D466, D468, and D470 each contribute to the Mg(2+) site. Zn(2+) is bound by residues C809, C883, C890, and C893.

The protein belongs to the RNA polymerase beta' chain family. As to quaternary structure, the RNAP catalytic core consists of 2 alpha, 1 beta, 1 beta' and 1 omega subunit. When a sigma factor is associated with the core the holoenzyme is formed, which can initiate transcription. Mg(2+) serves as cofactor. Requires Zn(2+) as cofactor.

It carries out the reaction RNA(n) + a ribonucleoside 5'-triphosphate = RNA(n+1) + diphosphate. Its function is as follows. DNA-dependent RNA polymerase catalyzes the transcription of DNA into RNA using the four ribonucleoside triphosphates as substrates. The sequence is that of DNA-directed RNA polymerase subunit beta' from Nitratidesulfovibrio vulgaris (strain ATCC 29579 / DSM 644 / CCUG 34227 / NCIMB 8303 / VKM B-1760 / Hildenborough) (Desulfovibrio vulgaris).